Here is a 379-residue protein sequence, read N- to C-terminus: Putative clathrin assembly protein At1g68110 (379 aa).

One can recognise an ENTH domain in the interval N26–L158.

The protein localises to the membrane. It is found in the clathrin-coated pit. The protein resides in the golgi apparatus. It localises to the cytoplasmic vesicle. Its subcellular location is the clathrin-coated vesicle. The sequence is that of Putative clathrin assembly protein At1g68110 from Arabidopsis thaliana (Mouse-ear cress).